The following is a 188-amino-acid chain: Elongation factor P (188 aa).

Residue Lys-34 is modified to N6-(3,6-diaminohexanoyl)-5-hydroxylysine.

It belongs to the elongation factor P family. May be beta-lysylated on the epsilon-amino group of Lys-34 by the combined action of EpmA and EpmB, and then hydroxylated on the C5 position of the same residue by EpmC (if this protein is present). Lysylation is critical for the stimulatory effect of EF-P on peptide-bond formation. The lysylation moiety may extend toward the peptidyltransferase center and stabilize the terminal 3-CCA end of the tRNA. Hydroxylation of the C5 position on Lys-34 may allow additional potential stabilizing hydrogen-bond interactions with the P-tRNA.

It localises to the cytoplasm. It participates in protein biosynthesis; polypeptide chain elongation. Its function is as follows. Involved in peptide bond synthesis. Alleviates ribosome stalling that occurs when 3 or more consecutive Pro residues or the sequence PPG is present in a protein, possibly by augmenting the peptidyl transferase activity of the ribosome. Modification of Lys-34 is required for alleviation. This Xanthomonas campestris pv. campestris (strain B100) protein is Elongation factor P.